The primary structure comprises 1131 residues: MADIKEGVEEGSVKVDMIKEPLTQGDTGVDEVDFAKITLDDAFKYLNCNKHGLSSAEAAARLQQHGPNKLPDSSRNPVLVFLGYMWNPLAWAMEAAAIISIALLDVADFVLIVGLLLINAIISFYEESNADKAIKALTAALAPKAMVVRDGAIVTIDAVNLVPGDVILIRLGNIVPADVKLLEEEGADEGEQEAPMQIDQAALTGESLPAKKFTGDVAFSGSSIKQGERHAVVYATGVNTFFGRAAALISGTNNVSNLQTVMNKMSAICIVTILLWVVVELAVQFGHYSHECVGGREGCPTLLNMLVVLVGGIPIAMPTVLSVTLALGAYKLAREGAIVTRMSAVEEMAGMDVLCSDKTGTLTLNKLSIDKSMVVPVGNMGVDEIMRMGALSANTVTEEPIDMVLWESYPDRETIKRDYKHTKYFPFNPNDKITIATCLEIATGRVFRVLKGSPQVVLAKAWNAAELDATVNQKMVEFANRGFRALGLAMADGDGKDGTKWEMLALLPLFDPPRHDTKETIEHCQNQGIQVKMITGDHLLIGKETAKMLGMGTEMFPSEVMIKARNGDASQLHGYKNFVEMVETCNGFAQVFPEHKFEIVKILQDSNHVVGMTGDGVNDAPALKKADVGVAVADATDAARGAADIVLTEPGLSTIVTAVIGARKIFQRMTTYSKYTIAMTFRICFTFGLITVIYDWYFPTILIVIMAVFNDGAMIALSKDRVVASKTPNSWNITNIFIMGMVYGLYLTLSTWALYQTATKTTFFEDKTPLHSLNDQYSVLQPWCEDEVRAKLGQTIDPYASLCESNSYAKQFDECEGYQKGSGVQVEDVPTLHAQCVTEQRYLRGAMTRSLIYTQVSISGQALVFVVRTAGYSLMERAGTSTYLAFFFAQVGATLFGIFGLGGFEKPRHQLEDCQFCDYSFHEPVDWFDSGIVPESGTESDFTASVIGCGGYVIVAWIWSAIWYVLLDPIKWILFWILNEEGFRDTMSWRESTKRSLDRRSKDDIGDKEFTGPSGMVPANYSNPLGRASMSKPVSAVLDRKSASLVAINRNSMTVSQDPNRALNIGRRSMIGRPSGPVGRTSMPLGRISRTSNTLSTGSKDGQIGRGSKPLNSSSAEIKPDKYDFASTIRE.

A run of 6 helical transmembrane segments spans residues 77 to 97, 98 to 118, 151 to 171, 231 to 251, 265 to 285, and 305 to 325; these read PVLVFLGYMWNPLAWAMEAAA, IISIALLDVADFVLIVGLLLI, GAIVTIDAVNLVPGDVILIRL, AVVYATGVNTFFGRAAALISG, MSAICIVTILLWVVVELAVQF, and MLVVLVGGIPIAMPTVLSVTL. Residue aspartate 357 is the 4-aspartylphosphate intermediate of the active site. Mg(2+) is bound by residues aspartate 615 and aspartate 619. Transmembrane regions (helical) follow at residues 642–662, 689–709, 733–753, 884–904, and 946–966; these read AADIVLTEPGLSTIVTAVIGA, LITVIYDWYFPTILIVIMAVF, ITNIFIMGMVYGLYLTLSTWA, LAFFFAQVGATLFGIFGLGGF, and VIGCGGYVIVAWIWSAIWYVL. The span at 994–1010 shows a compositional bias: basic and acidic residues; the sequence is KRSLDRRSKDDIGDKEF. Disordered regions lie at residues 994–1023 and 1067–1131; these read KRSLDRRSKDDIGDKEFTGPSGMVPANYSN and RRSM…TIRE. Residues 1089–1100 are compositionally biased toward polar residues; sequence SRTSNTLSTGSK. Positions 1118 to 1131 are enriched in basic and acidic residues; it reads IKPDKYDFASTIRE.

Belongs to the cation transport ATPase (P-type) (TC 3.A.3) family. Type IIIA subfamily.

Its subcellular location is the cell membrane. It catalyses the reaction ATP + H2O + H(+)(in) = ADP + phosphate + 2 H(+)(out). In terms of biological role, the plasma membrane ATPase of plants and fungi is a hydrogen ion pump. The proton gradient it generates drives the active transport of nutrients by H(+)-symport. The resulting external acidification and/or internal alkinization may mediate growth responses. The polypeptide is Plasma membrane ATPase (PMA1) (Dunaliella bioculata (Green alga)).